Reading from the N-terminus, the 269-residue chain is Elongation factor Ts (269 aa).

The interval 76–79 (TDFV) is involved in Mg(2+) ion dislocation from EF-Tu.

The protein belongs to the EF-Ts family.

The protein localises to the cytoplasm. In terms of biological role, associates with the EF-Tu.GDP complex and induces the exchange of GDP to GTP. It remains bound to the aminoacyl-tRNA.EF-Tu.GTP complex up to the GTP hydrolysis stage on the ribosome. The sequence is that of Elongation factor Ts from Deinococcus geothermalis (strain DSM 11300 / CIP 105573 / AG-3a).